A 146-amino-acid polypeptide reads, in one-letter code: Protein STIG1 (146 aa).

Positions 1-23 (MAFINLLILIILTLSSTPITTMS) are cleaved as a signal peptide. Asparagine 31, asparagine 61, and asparagine 84 each carry an N-linked (GlcNAc...) asparagine glycan.

The protein belongs to the STIG1 family. Post-translationally, glycosylated. Expressed exclusively in the stigmatic secretory zone.

The protein resides in the secreted. Functionally, involved in the temporal regulation of the exudate secretion onto the stigma. This is Protein STIG1 from Nicotiana tabacum (Common tobacco).